A 303-amino-acid chain; its full sequence is N-acetyl-D-glucosamine kinase (303 aa).

Residues 4 to 11 (GFDIGGTK) and 133 to 140 (GVGGGLVL) contribute to the ATP site. Residues H157, C177, C179, and C184 each coordinate Zn(2+).

The protein belongs to the ROK (NagC/XylR) family. NagK subfamily.

The catalysed reaction is N-acetyl-D-glucosamine + ATP = N-acetyl-D-glucosamine 6-phosphate + ADP + H(+). It functions in the pathway cell wall biogenesis; peptidoglycan recycling. Functionally, catalyzes the phosphorylation of N-acetyl-D-glucosamine (GlcNAc) derived from cell-wall degradation, yielding GlcNAc-6-P. This chain is N-acetyl-D-glucosamine kinase, found in Citrobacter koseri (strain ATCC BAA-895 / CDC 4225-83 / SGSC4696).